A 324-amino-acid chain; its full sequence is Olfactory receptor 8U3 (324 aa).

Topologically, residues M1–A25 are extracellular. A helical membrane pass occupies residues P26–I46. The Cytoplasmic portion of the chain corresponds to T47–R54. The helical transmembrane segment at L55–S75 threads the bilayer. Topologically, residues A76 to T99 are extracellular. A disulfide bond links C97 and C189. Residues Q100–Y120 traverse the membrane as a helical segment. At D121 to R139 the chain is on the cytoplasmic side. The helical transmembrane segment at V140–T160 threads the bilayer. At V161–E196 the chain is on the extracellular side. The helical transmembrane segment at I197–S217 threads the bilayer. At Y218–A237 the chain is on the cytoplasmic side. The chain crosses the membrane as a helical span at residues I238–M258. At Y259–D271 the chain is on the extracellular side. N-linked (GlcNAc...) asparagine glycosylation occurs at N265. The helical transmembrane segment at K272–L292 threads the bilayer. Residues R293–Y324 are Cytoplasmic-facing.

Belongs to the G-protein coupled receptor 1 family.

It is found in the cell membrane. In terms of biological role, odorant receptor. The protein is Olfactory receptor 8U3 of Homo sapiens (Human).